The sequence spans 359 residues: Fructose-bisphosphate aldolase (359 aa).

Serine 50 is a D-glyceraldehyde 3-phosphate binding site. The active-site Proton donor is aspartate 83. Zn(2+) is bound by residues histidine 84, aspartate 105, glutamate 142, and histidine 198. Glycine 199 serves as a coordination point for dihydroxyacetone phosphate. Histidine 232 contributes to the Zn(2+) binding site. Dihydroxyacetone phosphate is bound by residues 233–235 (GSS) and 275–278 (NIDT).

Belongs to the class II fructose-bisphosphate aldolase family. Homodimer. It depends on Zn(2+) as a cofactor.

It catalyses the reaction beta-D-fructose 1,6-bisphosphate = D-glyceraldehyde 3-phosphate + dihydroxyacetone phosphate. Its pathway is carbohydrate biosynthesis; Calvin cycle. The protein operates within carbohydrate degradation; glycolysis; D-glyceraldehyde 3-phosphate and glycerone phosphate from D-glucose: step 4/4. Functionally, catalyzes the aldol condensation of dihydroxyacetone phosphate (DHAP or glycerone-phosphate) with glyceraldehyde 3-phosphate (G3P) to form fructose 1,6-bisphosphate (FBP) in gluconeogenesis and the reverse reaction in glycolysis. The sequence is that of Fructose-bisphosphate aldolase (cbbA) from Sinorhizobium medicae (strain WSM419) (Ensifer medicae).